Consider the following 336-residue polypeptide: PTS system glucitol/sorbitol-specific EIIB component (336 aa).

The region spanning 3–195 (KYNAIKIVKG…AVQSMITTIL (193 aa)) is the PTS EIIB type-5 domain. C75 acts as the Phosphocysteine intermediate; for EIIB activity in catalysis. C75 is modified (phosphocysteine; by EIIA). 5 helical membrane-spanning segments follow: residues 194-214 (ILPF…SGFG), 228-248 (GIGL…ALLG), 250-270 (GAVI…KGTI), 278-298 (ALFA…LGLA), and 312-332 (VLYS…VASI).

The protein localises to the cell membrane. The catalysed reaction is D-sorbitol(out) + N(pros)-phospho-L-histidyl-[protein] = D-sorbitol 6-phosphate(in) + L-histidyl-[protein]. Functionally, the phosphoenolpyruvate-dependent sugar phosphotransferase system (sugar PTS), a major carbohydrate active transport system, catalyzes the phosphorylation of incoming sugar substrates concomitantly with their translocation across the cell membrane. The enzyme II complex composed of SrlA, SrlB and SrlE is involved in glucitol/sorbitol transport. The polypeptide is PTS system glucitol/sorbitol-specific EIIB component (srlE) (Clostridium beijerinckii (strain ATCC 51743 / NCIMB 8052) (Clostridium acetobutylicum)).